The chain runs to 173 residues: MIIFKDMITGDEMFTDSSKYKVVDDCILEVECRHVTRRMGDIQLEGANPSQEEADEGTDEVTESGLDLVLNQRLVETGFSKSDYKNYLKTYTKALQDKWKEVGMSDSQMAEAKTKFTEAVKKVLPKVGDLQFFMGESSNPDGLVALLEYRENSDGTETPVMMFFKHGLEEEKV.

The region spanning 1–173 (MIIFKDMITG…FKHGLEEEKV (173 aa)) is the TCTP domain.

The protein belongs to the TCTP family. In terms of tissue distribution, expressed by the venom gland.

It is found in the secreted. Functionally, venom protein that causes edema, enhances vascular permeability and is likely related to the inflammatory activity of the venom. This chain is Translationally-controlled tumor protein homolog, found in Grammostola rosea (Chilean rose tarantula).